Consider the following 174-residue polypeptide: Alpha-crystallin B chain (174 aa).

An N-acetylmethionine modification is found at methionine 1. In terms of domain architecture, sHSP spans 55–163; sequence RMPSWLETGL…PERSIPITRE (109 aa). Positions 82, 103, 105, and 110 each coordinate Zn(2+). The segment at 148–174 is disordered; sequence RKQSDVPERSIPITREEKPAIAGSQRK. Positions 149-166 are enriched in basic and acidic residues; sequence KQSDVPERSIPITREEKP.

Belongs to the small heat shock protein (HSP20) family. In terms of assembly, heteromer composed of three CRYAA and one CRYAB subunits. Aggregates with homologous proteins, including the small heat shock protein HSPB1, to form large heteromeric complexes. Inter-subunit bridging via zinc ions enhances stability, which is crucial as there is no protein turn over in the lens. As to expression, lens as well as other tissues.

Its function is as follows. May contribute to the transparency and refractive index of the lens. This chain is Alpha-crystallin B chain (CRYAB), found in Gallus gallus (Chicken).